The following is a 522-amino-acid chain: ATP synthase subunit alpha (522 aa).

176-183 (GDRQTGKT) serves as a coordination point for ATP.

It belongs to the ATPase alpha/beta chains family. As to quaternary structure, F-type ATPases have 2 components, CF(1) - the catalytic core - and CF(0) - the membrane proton channel. CF(1) has five subunits: alpha(3), beta(3), gamma(1), delta(1), epsilon(1). CF(0) has four main subunits: a, b, b' and c.

The protein localises to the cell membrane. The catalysed reaction is ATP + H2O + 4 H(+)(in) = ADP + phosphate + 5 H(+)(out). Functionally, produces ATP from ADP in the presence of a proton gradient across the membrane. The alpha chain is a regulatory subunit. This is ATP synthase subunit alpha from Chloroflexus aggregans (strain MD-66 / DSM 9485).